The chain runs to 377 residues: NIF3-like protein 1 (377 aa).

Residue K109 is modified to N6-acetyllysine. The interval 244-377 is mediates interaction with COPS2; it reads LLLHTGMGRL…ETDRDPLQVV (134 aa). A Phosphothreonine modification is found at T255. The residue at position 259 (S259) is a Phosphoserine.

Belongs to the GTP cyclohydrolase I type 2/NIF3 family. As to quaternary structure, homodimer. Interacts with COPS2. Interacts with THOC7.

It localises to the cytoplasm. Its subcellular location is the nucleus. May function as a transcriptional corepressor through its interaction with COPS2, negatively regulating the expression of genes involved in neuronal differentiation. This chain is NIF3-like protein 1, found in Homo sapiens (Human).